We begin with the raw amino-acid sequence, 291 residues long: N-acetylmannosamine kinase (291 aa).

ATP-binding positions include Ala5–Lys12 and Gly132–Ser139. Zn(2+)-binding residues include His156, Cys166, Cys168, and Cys173.

This sequence belongs to the ROK (NagC/XylR) family. NanK subfamily. Homodimer.

The catalysed reaction is an N-acyl-D-mannosamine + ATP = an N-acyl-D-mannosamine 6-phosphate + ADP + H(+). Its pathway is amino-sugar metabolism; N-acetylneuraminate degradation; D-fructose 6-phosphate from N-acetylneuraminate: step 2/5. Its function is as follows. Catalyzes the phosphorylation of N-acetylmannosamine (ManNAc) to ManNAc-6-P. The chain is N-acetylmannosamine kinase from Escherichia coli O139:H28 (strain E24377A / ETEC).